The chain runs to 1228 residues: DNA-directed RNA polymerase subunit beta (1228 aa).

Belongs to the RNA polymerase beta chain family. The RNAP catalytic core consists of 2 alpha, 1 beta, 1 beta' and 1 omega subunit. When a sigma factor is associated with the core the holoenzyme is formed, which can initiate transcription.

It catalyses the reaction RNA(n) + a ribonucleoside 5'-triphosphate = RNA(n+1) + diphosphate. DNA-dependent RNA polymerase catalyzes the transcription of DNA into RNA using the four ribonucleoside triphosphates as substrates. The sequence is that of DNA-directed RNA polymerase subunit beta from Leptospira biflexa.